Here is an 888-residue protein sequence, read N- to C-terminus: Alanine--tRNA ligase (888 aa).

4 residues coordinate Zn(2+): H564, H568, C676, and H680.

The protein belongs to the class-II aminoacyl-tRNA synthetase family. The cofactor is Zn(2+).

It localises to the cytoplasm. The catalysed reaction is tRNA(Ala) + L-alanine + ATP = L-alanyl-tRNA(Ala) + AMP + diphosphate. In terms of biological role, catalyzes the attachment of alanine to tRNA(Ala) in a two-step reaction: alanine is first activated by ATP to form Ala-AMP and then transferred to the acceptor end of tRNA(Ala). Also edits incorrectly charged Ser-tRNA(Ala) and Gly-tRNA(Ala) via its editing domain. This Bartonella quintana (strain Toulouse) (Rochalimaea quintana) protein is Alanine--tRNA ligase.